A 284-amino-acid polypeptide reads, in one-letter code: Pantothenate synthetase (284 aa).

ATP is bound at residue M30–H37. H37 acts as the Proton donor in catalysis. Q61 is a (R)-pantoate binding site. Position 61 (Q61) interacts with beta-alanine. An ATP-binding site is contributed by G149–D152. Residue Q155 coordinates (R)-pantoate. Residues V178 and L186–R189 each bind ATP.

This sequence belongs to the pantothenate synthetase family. Homodimer.

The protein localises to the cytoplasm. It catalyses the reaction (R)-pantoate + beta-alanine + ATP = (R)-pantothenate + AMP + diphosphate + H(+). It participates in cofactor biosynthesis; (R)-pantothenate biosynthesis; (R)-pantothenate from (R)-pantoate and beta-alanine: step 1/1. Functionally, catalyzes the condensation of pantoate with beta-alanine in an ATP-dependent reaction via a pantoyl-adenylate intermediate. This is Pantothenate synthetase from Photorhabdus laumondii subsp. laumondii (strain DSM 15139 / CIP 105565 / TT01) (Photorhabdus luminescens subsp. laumondii).